Consider the following 498-residue polypeptide: Calcitonin receptor (498 aa).

Positions 1-29 are cleaved as a signal peptide; it reads MRFTLTRWCLTLFIFLNRPLPVLPDSADG. The Extracellular portion of the chain corresponds to 30–147; it reads AHTPTLEPEP…FTPDKLQNAY (118 aa). Cystine bridges form between C56/C82, C73/C113, and C96/C135. N74, N126, and N131 each carry an N-linked (GlcNAc...) asparagine glycan. The helical transmembrane segment at 148–170 threads the bilayer; the sequence is ILYYLAIVGHSLSILTLLISLGI. Residues 171-198 lie on the Cytoplasmic side of the membrane; it reads FMFLRYFNLLAPFNALLYPTRSISCQRV. Residues 199-219 traverse the membrane as a helical segment; that stretch reads TLHKNMFLTYVLNSIIIIVHL. Over 220 to 236 the chain is Extracellular; sequence VVIVPNGELVKRDPPIC. Cysteines 236 and 306 form a disulfide. A helical membrane pass occupies residues 237-259; the sequence is KVLHFFHQYMMSCNYFWMLCEGV. Topologically, residues 260-276 are cytoplasmic; sequence YLHTLIVVSVFAEGQRL. The helical transmembrane segment at 277–297 threads the bilayer; sequence WWYHVLGWGFPLIPTTAHAIT. Topologically, residues 298 to 313 are extracellular; it reads RAVLFNDNCWLSVDTN. A helical transmembrane segment spans residues 314–337; that stretch reads LLYIIHGPVMAALVVNFFFLLNIL. Residues 338–357 are Cytoplasmic-facing; the sequence is RVLVKKLKESQEAESHMYLK. Residues 358-376 form a helical membrane-spanning segment; the sequence is AVRATLILVPLLGVQFVVL. Topologically, residues 377 to 384 are extracellular; the sequence is PWRPSTPL. The helical transmembrane segment at 385–411 threads the bilayer; that stretch reads LGKIYDYVVHSLIHFQGFFVAIIYCFC. Topologically, residues 412–498 are cytoplasmic; the sequence is NHEVQGALKR…MEVLEQETSA (87 aa).

The protein belongs to the G-protein coupled receptor 2 family. As to quaternary structure, heterodimer of CALCR and RAMP1, RAMP2 or RAMP3; the receptor complexes function as AMYR1, AMYR2 and AMYR3 receptors, respectively, and respond to amylin/IAPP, calcitonin/CT and CGRP1 ligands. Interacts with GPRASP2.

It is found in the cell membrane. G protein-coupled receptor activated by ligand peptides amylin (IAPP), calcitonin (CT/CALCA) and calcitonin gene-related peptide type 1 (CGRP1/CALCA). CALCR interacts with receptor-activity-modifying proteins RAMP1, 2 and 3 to form receptor complexes AMYR1, 2 and 3, respectively. IAPP, CT and CGRP1 activate CALCR and AMYRs with distinct modes of receptor activation resulting in specific phenotypes. Ligand binding causes a conformation change that triggers signaling via guanine nucleotide-binding proteins (G proteins) and modulates the activity of downstream effectors. Activates cAMP-dependent pathway. The chain is Calcitonin receptor from Sus scrofa (Pig).